Reading from the N-terminus, the 489-residue chain is CDK5RAP3 protein homolog (489 aa).

This sequence belongs to the CDK5RAP3 family.

In terms of biological role, substrate adapter of E3 ligase complexes mediating ufmylation, the covalent attachment of the ubiquitin-like modifier UFM1 to substrate proteins, and which is involved in various processes, such as ribosome recycling and reticulophagy (also called ER-phagy). In Caenorhabditis elegans, this protein is CDK5RAP3 protein homolog.